A 187-amino-acid chain; its full sequence is Peptidyl-tRNA hydrolase (187 aa).

Tyrosine 18 contributes to the tRNA binding site. Histidine 23 acts as the Proton acceptor in catalysis. Residues phenylalanine 65, asparagine 67, and asparagine 113 each contribute to the tRNA site.

Belongs to the PTH family. As to quaternary structure, monomer.

Its subcellular location is the cytoplasm. The catalysed reaction is an N-acyl-L-alpha-aminoacyl-tRNA + H2O = an N-acyl-L-amino acid + a tRNA + H(+). Functionally, hydrolyzes ribosome-free peptidyl-tRNAs (with 1 or more amino acids incorporated), which drop off the ribosome during protein synthesis, or as a result of ribosome stalling. Catalyzes the release of premature peptidyl moieties from peptidyl-tRNA molecules trapped in stalled 50S ribosomal subunits, and thus maintains levels of free tRNAs and 50S ribosomes. The sequence is that of Peptidyl-tRNA hydrolase from Coxiella burnetii (strain CbuK_Q154) (Coxiella burnetii (strain Q154)).